We begin with the raw amino-acid sequence, 1103 residues long: Mediator of RNA polymerase II transcription subunit 14 (1103 aa).

Disordered stretches follow at residues 22-61 and 1043-1067; these read LNGV…GSDE and TTPK…PAIR. A compositionally biased stretch (polar residues) spans 23 to 36; the sequence is NGVSSAPAGSSQLG.

The protein belongs to the Mediator complex subunit 14 family. As to quaternary structure, component of the Mediator complex.

It is found in the nucleus. Component of the Mediator complex, a coactivator involved in the regulated transcription of nearly all RNA polymerase II-dependent genes. Mediator functions as a bridge to convey information from gene-specific regulatory proteins to the basal RNA polymerase II transcription machinery. Mediator is recruited to promoters by direct interactions with regulatory proteins and serves as a scaffold for the assembly of a functional preinitiation complex with RNA polymerase II and the general transcription factors. The chain is Mediator of RNA polymerase II transcription subunit 14 (rgr1) from Emericella nidulans (strain FGSC A4 / ATCC 38163 / CBS 112.46 / NRRL 194 / M139) (Aspergillus nidulans).